The primary structure comprises 180 residues: MGAFHATTIFAIRHNGASAMAGDGQVTFGNAVVMKHTAKKVRRLFQGNVLAGFAGSVADAFTLFEMFEGKLEQWNGNLPRAAVELAKEWRSDKVLRRLEAMLIVMDKQHLLLVSGTGEVIEPDDGMLAIGSGGQYALAAGRALKKYAGGSMTAKEIAKAALEIAADICVYTNGHIIVEEL.

The active site involves threonine 7. Na(+) is bound by residues alanine 165, cysteine 168, and threonine 171.

The protein belongs to the peptidase T1B family. HslV subfamily. In terms of assembly, a double ring-shaped homohexamer of HslV is capped on each side by a ring-shaped HslU homohexamer. The assembly of the HslU/HslV complex is dependent on binding of ATP.

The protein localises to the cytoplasm. It catalyses the reaction ATP-dependent cleavage of peptide bonds with broad specificity.. Allosterically activated by HslU binding. Functionally, protease subunit of a proteasome-like degradation complex believed to be a general protein degrading machinery. The sequence is that of ATP-dependent protease subunit HslV from Geobacillus kaustophilus (strain HTA426).